Reading from the N-terminus, the 503-residue chain is Probable cytosol aminopeptidase (503 aa).

The Mn(2+) site is built by Lys272 and Asp277. Lys284 is a catalytic residue. Asp295, Asp354, and Glu356 together coordinate Mn(2+). The active site involves Arg358.

Belongs to the peptidase M17 family. Mn(2+) serves as cofactor.

It localises to the cytoplasm. The enzyme catalyses Release of an N-terminal amino acid, Xaa-|-Yaa-, in which Xaa is preferably Leu, but may be other amino acids including Pro although not Arg or Lys, and Yaa may be Pro. Amino acid amides and methyl esters are also readily hydrolyzed, but rates on arylamides are exceedingly low.. It carries out the reaction Release of an N-terminal amino acid, preferentially leucine, but not glutamic or aspartic acids.. Presumably involved in the processing and regular turnover of intracellular proteins. Catalyzes the removal of unsubstituted N-terminal amino acids from various peptides. The chain is Probable cytosol aminopeptidase from Chlorobium limicola (strain DSM 245 / NBRC 103803 / 6330).